Reading from the N-terminus, the 65-residue chain is Large ribosomal subunit protein bL35 (65 aa).

It belongs to the bacterial ribosomal protein bL35 family.

This chain is Large ribosomal subunit protein bL35, found in Heliobacterium modesticaldum (strain ATCC 51547 / Ice1).